Reading from the N-terminus, the 317-residue chain is Protoheme IX farnesyltransferase (317 aa).

Transmembrane regions (helical) follow at residues 25–45 (FFAL…LVGM), 54–74 (PVIG…SGCL), 117–137 (LMLG…TIVF), 167–189 (IGQA…IIFI), 244–264 (LGFG…AMLV), and 281–301 (AAMS…SALL).

Belongs to the UbiA prenyltransferase family. Protoheme IX farnesyltransferase subfamily.

It is found in the cell inner membrane. The enzyme catalyses heme b + (2E,6E)-farnesyl diphosphate + H2O = Fe(II)-heme o + diphosphate. Its pathway is porphyrin-containing compound metabolism; heme O biosynthesis; heme O from protoheme: step 1/1. Converts heme B (protoheme IX) to heme O by substitution of the vinyl group on carbon 2 of heme B porphyrin ring with a hydroxyethyl farnesyl side group. In Methylobacterium nodulans (strain LMG 21967 / CNCM I-2342 / ORS 2060), this protein is Protoheme IX farnesyltransferase.